Here is a 274-residue protein sequence, read N- to C-terminus: MQQLQNIIETAFERRAEITPANADTVTREAVNQVIALLDSGALRVAEKIDGQWVTHQWLKKAVLLSFRINDNQVIEGAESRYFDKVPMKFADYDEARFQKEGFRVVPPAAVRQGAFIARNTVLMPSYVNIGAYVDEGTMVDTWATVGSCAQIGKNVHLSGGVGIGGVLEPLQANPTIIEDNCFIGARSEVVEGVIVEEGSVISMGVYIGQSTRIYDRETGDIHYGRVPAGSVVVSGNLPSKDGKYSLYCAVIVKKVDAKTRGKVGINELLRTID.

Substrate-binding residues include Arg104 and Asp141.

This sequence belongs to the transferase hexapeptide repeat family. In terms of assembly, homotrimer.

It is found in the cytoplasm. The enzyme catalyses (S)-2,3,4,5-tetrahydrodipicolinate + succinyl-CoA + H2O = (S)-2-succinylamino-6-oxoheptanedioate + CoA. It participates in amino-acid biosynthesis; L-lysine biosynthesis via DAP pathway; LL-2,6-diaminopimelate from (S)-tetrahydrodipicolinate (succinylase route): step 1/3. This chain is 2,3,4,5-tetrahydropyridine-2,6-dicarboxylate N-succinyltransferase (dapD), found in Escherichia coli O157:H7.